The chain runs to 126 residues: Glycine cleavage system H protein (126 aa).

Residues 22–104 enclose the Lipoyl-binding domain; the sequence is IAYVGITDYA…YGKGWLIKIK (83 aa). Lysine 63 bears the N6-lipoyllysine mark.

It belongs to the GcvH family. As to quaternary structure, the glycine cleavage system is composed of four proteins: P, T, L and H. It depends on (R)-lipoate as a cofactor.

Functionally, the glycine cleavage system catalyzes the degradation of glycine. The H protein shuttles the methylamine group of glycine from the P protein to the T protein. This is Glycine cleavage system H protein from Phocaeicola vulgatus (strain ATCC 8482 / DSM 1447 / JCM 5826 / CCUG 4940 / NBRC 14291 / NCTC 11154) (Bacteroides vulgatus).